A 1709-amino-acid chain; its full sequence is Hybrid signal transduction histidine kinase L (1709 aa).

Disordered stretches follow at residues 52–192 (SNNN…SPPH), 206–276 (FFSG…NSSD), 413–535 (TSNS…NNSC), and 554–615 (QQQQ…IFNN). A compositionally biased stretch (low complexity) spans 53–87 (NNNNNNNNNNNNNNNNNNNNNNNNNNNNNNNNNNN). The span at 88 to 100 (NEEKSNNETEKTL) shows a compositional bias: basic and acidic residues. Residues 106–148 (TTTTTTTNNNNNNNNNNNNNNNNNNNNNNNNNNNNNNNNNNTN) show a composition bias toward low complexity. Residues 149–170 (SSNDIYMNSPSSTLSSPGNAGN) show a composition bias toward polar residues. Low complexity-rich tracts occupy residues 413–466 (TSNS…TPNS), 486–535 (NNSP…NNSC), and 554–576 (QQQQ…PTTS). Over residues 585–610 (LTINTSFKTSPMSSPKSFNKPSQSPQ) the composition is skewed to polar residues. Residues 700 to 771 (ATRKMVTCIE…ATLTDKKTWN (72 aa)) enclose the PAS domain. A PAC domain is found at 770–822 (WNGFIRTRHNNNTLIYFEASISPVLDQFQQILYYNCTKRDVTQKRIDEESKTL). One can recognise a Histidine kinase domain in the interval 837-1059 (MMSHDIRTPM…TFTCILKFKK (223 aa)). H840 bears the Phosphohistidine; by autocatalysis mark. Disordered regions lie at residues 1068–1112 (LLPA…HQQH) and 1137–1298 (QHQL…PTSP). Composition is skewed to low complexity over residues 1075 to 1112 (LQQQ…HQQH), 1137 to 1153 (QHQL…LQQQ), and 1176 to 1194 (NQHI…QQQQ). The span at 1204–1221 (HNSHGHNHHGSHHNHNHQ) shows a compositional bias: basic residues. Composition is skewed to polar residues over residues 1244 to 1257 (NEQQ…NSFS) and 1275 to 1298 (NISQ…PTSP). Response regulatory domains lie at 1312–1492 (KMLF…MMYL) and 1570–1692 (KVLV…KKYG). 4-aspartylphosphate is present on D1366. Composition is skewed to low complexity over residues 1390–1412 (QHLQ…SELQ) and 1420–1440 (KNSS…SSGG). Positions 1390–1440 (QHLQQQQEQEQQQQQEQQQSELQKQPDVENKNSSQNNDNNNNNNKSNSSGG) are disordered. A 4-aspartylphosphate modification is found at D1622.

In terms of processing, activation probably requires transfer of a phosphate group between a histidine in the kinase core (transmitter) domain and an aspartate of the receiver domain.

It catalyses the reaction ATP + protein L-histidine = ADP + protein N-phospho-L-histidine.. Its function is as follows. Acts as a receptor histidine kinase for a signal transduction pathway. This protein undergoes an ATP-dependent autophosphorylation at a conserved histidine residue in the kinase core, and a phosphoryl group is then transferred to a conserved aspartate residue in the receiver domain. The chain is Hybrid signal transduction histidine kinase L (dhkL) from Dictyostelium discoideum (Social amoeba).